Reading from the N-terminus, the 245-residue chain is Geranylgeranylglyceryl phosphate synthase (245 aa).

Mg(2+) contacts are provided by aspartate 22 and serine 51. Sn-glycerol 1-phosphate contacts are provided by residues 169–175, 200–201, and 222–223; these read YLEAGSG, GG, and GT.

It belongs to the GGGP/HepGP synthase family. Group II subfamily. As to quaternary structure, homotetramer. Homohexamer. It depends on Mg(2+) as a cofactor.

It localises to the cytoplasm. The enzyme catalyses sn-glycerol 1-phosphate + (2E,6E,10E)-geranylgeranyl diphosphate = sn-3-O-(geranylgeranyl)glycerol 1-phosphate + diphosphate. The protein operates within membrane lipid metabolism; glycerophospholipid metabolism. In terms of biological role, prenyltransferase that catalyzes the transfer of the geranylgeranyl moiety of geranylgeranyl diphosphate (GGPP) to the C3 hydroxyl of sn-glycerol-1-phosphate (G1P). This reaction is the first ether-bond-formation step in the biosynthesis of archaeal membrane lipids. This is Geranylgeranylglyceryl phosphate synthase from Methanothermobacter thermautotrophicus (strain ATCC 29096 / DSM 1053 / JCM 10044 / NBRC 100330 / Delta H) (Methanobacterium thermoautotrophicum).